Consider the following 627-residue polypeptide: DNA mismatch repair protein MutL (627 aa).

It belongs to the DNA mismatch repair MutL/HexB family.

Functionally, this protein is involved in the repair of mismatches in DNA. It is required for dam-dependent methyl-directed DNA mismatch repair. May act as a 'molecular matchmaker', a protein that promotes the formation of a stable complex between two or more DNA-binding proteins in an ATP-dependent manner without itself being part of a final effector complex. The chain is DNA mismatch repair protein MutL from Mesorhizobium japonicum (strain LMG 29417 / CECT 9101 / MAFF 303099) (Mesorhizobium loti (strain MAFF 303099)).